The chain runs to 292 residues: BTB/POZ domain-containing protein KCTD7 (292 aa).

A disordered region spans residues 1–27 (MVVFSAASDSEKPGDAMSGADKGEEEY). The 89-residue stretch at 56 to 144 (IPLNVGGTYF…YAIGPLLENL (89 aa)) folds into the BTB domain.

It is found in the cell membrane. It localises to the cytoplasm. The protein localises to the cytosol. This Danio rerio (Zebrafish) protein is BTB/POZ domain-containing protein KCTD7 (kctd7).